A 402-amino-acid chain; its full sequence is 26S proteasome non-ATPase regulatory subunit 4 homolog (402 aa).

Residues 5 to 189 (ATMICIDNSE…LSDVLISTPI (185 aa)) enclose the VWFA domain. Positions 221–240 (NVDPELALALRLSMEEERAR) constitute a UIM 1 domain. Over residues 241–261 (QEAIAKKAAEESSGAENKDHA) the composition is skewed to basic and acidic residues. 2 disordered regions span residues 241–292 (QEAI…EDDD) and 302–321 (MSME…MAEA). 2 consecutive UIM domains span residues 291-310 (DDAQ…GSSG) and 323-342 (VDDQ…AGGS). Residues 363 to 402 (SLPGVDPNDPSVKDLLASLHGQGEQEKKEDKSDKPEDEKK) form a disordered region. Basic and acidic residues predominate over residues 385–402 (GEQEKKEDKSDKPEDEKK).

The protein belongs to the proteasome subunit S5A family. Component of the 19S regulatory particle (RP/PA700) base subcomplex of the 26S proteasome. The 26S proteasome is composed of a core protease (CP), known as the 20S proteasome, capped at one or both ends by the 19S regulatory particle (RP/PA700). The RP/PA700 complex is composed of at least 17 different subunits in two subcomplexes, the base and the lid, which form the portions proximal and distal to the 20S proteolytic core, respectively. Interacts with PI4KG4.

Plays a role in maintaining the structural integrity of the 19S regulatory particle (RP), subcomplex of the 26S proteasome. Plays a major role in both the direct and indirect recognition of ubiquitinated substrates of ubiquitin/26S proteasome-mediated proteolysis (UPP). Binds and presumably selects ubiquitin-conjugates for destruction. The sequence is that of 26S proteasome non-ATPase regulatory subunit 4 homolog from Oryza sativa subsp. japonica (Rice).